The primary structure comprises 149 residues: Transcriptional repressor NrdR (149 aa).

Residues 3–34 fold into a zinc finger; the sequence is CPFCAAVDTKVIDSRLVSDGSQVRRRRQCLDC. The ATP-cone domain maps to 49–139; it reads PRVIKSDEVR…VYRSFEDVRE (91 aa).

This sequence belongs to the NrdR family. Zn(2+) serves as cofactor.

Negatively regulates transcription of bacterial ribonucleotide reductase nrd genes and operons by binding to NrdR-boxes. This chain is Transcriptional repressor NrdR, found in Yersinia pseudotuberculosis serotype O:1b (strain IP 31758).